Reading from the N-terminus, the 158-residue chain is Cyclic pyranopterin monophosphate synthase (158 aa).

Substrate-binding positions include 76 to 78 (LCH) and 114 to 115 (ME). Residue D129 is part of the active site.

It belongs to the MoaC family. Homohexamer; trimer of dimers.

The catalysed reaction is (8S)-3',8-cyclo-7,8-dihydroguanosine 5'-triphosphate = cyclic pyranopterin phosphate + diphosphate. Its pathway is cofactor biosynthesis; molybdopterin biosynthesis. In terms of biological role, catalyzes the conversion of (8S)-3',8-cyclo-7,8-dihydroguanosine 5'-triphosphate to cyclic pyranopterin monophosphate (cPMP). The sequence is that of Cyclic pyranopterin monophosphate synthase from Shewanella baltica (strain OS223).